The chain runs to 392 residues: MRSLATFMSLLTICWGLHEDRLTLANNRFAISLLHNLPTSTETNIFFSPYSISVALGMAFAGARGETREDLFQGFGYPRSDIDDDAVLEAYASHTRRLKSLRSNSTLDAAIGAAIHERISLLSSFEDVLNNSFGADILKVDFINGGQAAVDVINGWVHRKTRGKINLLFGGPLETIIRLVLLNAIYFKGTWDTVFDQRLTTKKPFMNACSTPTEVDTMRGEVYVRHKSFPLLGVDIAEIPYRGMDYSMTILLPTRIDGAEVLKRNITEHLLQDLVKQLVEQQVTVYLPKFKLETEYLLKDHLKKLGINRIFGSGADFSGITHGANLAVSDVVHKTVLEVHEAGTEAAGATGVIIVAESLVESVEFRVDHPFIFFIRNTQTKDILFVGQVNHL.

A signal peptide spans 1–16 (MRSLATFMSLLTICWG). Residues Asn104, Asn130, and Asn265 are each glycosylated (N-linked (GlcNAc...) asparagine).

This sequence belongs to the serpin family. In terms of tissue distribution, female salivary gland.

Its subcellular location is the secreted. Serpin with unknown function. Weakly inhibits human granzyme B (GZMB). Acts as a substrate for porcine elastase. This chain is Iripin-4, found in Ixodes ricinus (Common tick).